We begin with the raw amino-acid sequence, 207 residues long: Probable HTH-type transcriptional regulator YttP (207 aa).

One can recognise an HTH tetR-type domain in the interval 3–63; the sequence is VSTKDKIIES…HLVSEFYEGY (61 aa). The segment at residues 26–45 is a DNA-binding region (H-T-H motif); that stretch reads SVREIAKSADVNVAHISYYF.

The chain is Probable HTH-type transcriptional regulator YttP (yttP) from Bacillus subtilis (strain 168).